The sequence spans 193 residues: Ribonuclease HII (193 aa).

The region spanning Tyr15–Cys193 is the RNase H type-2 domain. Residues Asp21, Glu22, and Asp112 each contribute to the a divalent metal cation site.

The protein belongs to the RNase HII family. Mn(2+) is required as a cofactor. The cofactor is Mg(2+).

Its subcellular location is the cytoplasm. It catalyses the reaction Endonucleolytic cleavage to 5'-phosphomonoester.. In terms of biological role, endonuclease that specifically degrades the RNA of RNA-DNA hybrids. This is Ribonuclease HII from Rickettsia felis (strain ATCC VR-1525 / URRWXCal2) (Rickettsia azadi).